Consider the following 239-residue polypeptide: Homeobox-leucine zipper protein HOX12 (239 aa).

The segment at 25–65 is disordered; that stretch reads ATSGGEQKKARQRRRRKVKPEAAAALAGESGGDEQAKKRRL. A DNA-binding region (homeobox) is located at residues 58–117; that stretch reads EQAKKRRLSDEQARFLEMSFKKERKLETPRKVQLAAELGLDAKQVAVWFQNRRARHKSKL. Residues 107 to 168 are a coiled coil; the sequence is QNRRARHKSK…KLAAVAAATT (62 aa).

The protein belongs to the HD-ZIP homeobox family. Class I subfamily. As to expression, expressed in seedlings, roots, stems, leaf sheaths and panicles.

It is found in the nucleus. In terms of biological role, probable transcription factor. This Oryza sativa subsp. japonica (Rice) protein is Homeobox-leucine zipper protein HOX12 (HOX12).